Reading from the N-terminus, the 428-residue chain is Phosphomethylpyrimidine synthase (428 aa).

Substrate contacts are provided by residues Asn-66, Met-94, Tyr-123, His-162, Ser-184 to Gly-186, Asp-225 to Arg-228, and Glu-264. His-268 is a Zn(2+) binding site. Residue Tyr-291 coordinates substrate. His-332 lines the Zn(2+) pocket. [4Fe-4S] cluster contacts are provided by Cys-408, Cys-411, and Cys-415.

It belongs to the ThiC family. It depends on [4Fe-4S] cluster as a cofactor.

The enzyme catalyses 5-amino-1-(5-phospho-beta-D-ribosyl)imidazole + S-adenosyl-L-methionine = 4-amino-2-methyl-5-(phosphooxymethyl)pyrimidine + CO + 5'-deoxyadenosine + formate + L-methionine + 3 H(+). The protein operates within cofactor biosynthesis; thiamine diphosphate biosynthesis. Its function is as follows. Catalyzes the synthesis of the hydroxymethylpyrimidine phosphate (HMP-P) moiety of thiamine from aminoimidazole ribotide (AIR) in a radical S-adenosyl-L-methionine (SAM)-dependent reaction. This Sulfolobus acidocaldarius (strain ATCC 33909 / DSM 639 / JCM 8929 / NBRC 15157 / NCIMB 11770) protein is Phosphomethylpyrimidine synthase.